A 778-amino-acid polypeptide reads, in one-letter code: Kin of IRRE-like protein 3 (778 aa).

Positions 1 to 21 (MKPFQLDLLFVCFFLFSQELG) are cleaved as a signal peptide. Residues 22–535 (LQKRGCCLVL…GLEAESVPMA (514 aa)) lie on the Extracellular side of the membrane. Ig-like C2-type domains are found at residues 48–142 (YSFS…ARLT), 147–243 (PDDP…TSVT), 249–330 (PPLV…RTVD), 335–415 (PRMT…VTLT), and 419–515 (PPII…IRLK). The cysteines at positions 69 and 127 are disulfide-linked. Asn-167 carries N-linked (GlcNAc...) asparagine glycosylation. A disulfide bridge connects residues Cys-170 and Cys-227. Asn-253 carries N-linked (GlcNAc...) asparagine glycosylation. Residues Cys-271 and Cys-314 are joined by a disulfide bond. Asn-324 carries N-linked (GlcNAc...) asparagine glycosylation. 2 disulfides stabilise this stretch: Cys-356/Cys-398 and Cys-440/Cys-499. The N-linked (GlcNAc...) asparagine glycan is linked to Asn-498. A helical membrane pass occupies residues 536 to 556 (VIIGVAVGAGVAFLVLMATIV). Over 557–778 (AFCCARSQRN…PLQRRMQTHV (222 aa)) the chain is Cytoplasmic. Positions 727-736 (CDSSVSSSGK) are enriched in polar residues. The segment at 727-778 (CDSSVSSSGKQDGYVQFDKASKASASSSHHSQSSSQNSDPSRPLQRRMQTHV) is disordered. The segment covering 748–762 (KASASSSHHSQSSSQ) has biased composition (low complexity).

This sequence belongs to the immunoglobulin superfamily. In terms of assembly, homodimer; mediates homophilic interactions to promote cell adhesion. Interacts with NPHS1; forms heterodimers with NPHS1. Interacts with NPHS2/podocin (via the C-terminus). Interacts with CASK. Interacts (via extracellular region) with MAP1B. Interacts (via extracellular region) with MYO16. Interacts (via intracellular region) with ATP1B1. Interacts (via intracellular region) with SHMT2. Interacts (via intracellular region) with UFC1. Undergoes proteolysis by a metalloprotease and gives rise to a soluble form. Expressed in fetal and adult brain. Also expressed in kidney, specifically in podocytes of kidney glomeruli. Also expressed in skeletal muscle.

It is found in the cell membrane. The protein resides in the secreted. Functionally, synaptic adhesion molecule required for the formation of target-specific synapses. Required for formation of target-specific synapses at hippocampal mossy fiber synapses. Required for formation of mossy fiber filopodia, the synaptic structures connecting dentate granule and GABA neurons. Probably acts as a homophilic adhesion molecule that promotes trans-cellular interactions and stabilize mossy fiber filipodia contact and subsequent synapse formation. Required for the coalescence of vomeronasal sensory neuron axons. May be involved in the hematopoietic supportive capacity of stroma cells; the secreted extracellular domain is directly responsible for supporting hematopoietic stem cells. The polypeptide is Kin of IRRE-like protein 3 (Homo sapiens (Human)).